A 491-amino-acid polypeptide reads, in one-letter code: Monothiol glutaredoxin-S11 (491 aa).

3 consecutive Glutaredoxin domains span residues 151–253 (NKRL…NIPL), 287–389 (KERL…GIVA), and 394–491 (EDRL…TLSE). Lys411 serves as a coordination point for glutathione. Cys419 contacts [2Fe-2S] cluster. Glutathione is bound by residues Arg448, Phe460, and 473–474 (CD).

The protein belongs to the glutaredoxin family. CGFS subfamily.

It is found in the cytoplasm. Its function is as follows. May only reduce GSH-thiol disulfides, but not protein disulfides. The sequence is that of Monothiol glutaredoxin-S11 (GRXS11) from Oryza sativa subsp. japonica (Rice).